Here is a 213-residue protein sequence, read N- to C-terminus: Na(+)-translocating NADH-quinone reductase subunit D (213 aa).

The next 7 helical transmembrane spans lie at 21–41, 42–62, 77–97, 101–121, 131–151, 153–173, and 183–203; these read PLIA…VNTA, LTMG…VSLL, IIIS…FFDI, LSVF…AESL, FLDG…VSII, EFFG…FYAS, and FGLM…IWGV.

Belongs to the NqrDE/RnfAE family. Composed of six subunits; NqrA, NqrB, NqrC, NqrD, NqrE and NqrF.

The protein localises to the cell inner membrane. The enzyme catalyses a ubiquinone + n Na(+)(in) + NADH + H(+) = a ubiquinol + n Na(+)(out) + NAD(+). In terms of biological role, NQR complex catalyzes the reduction of ubiquinone-1 to ubiquinol by two successive reactions, coupled with the transport of Na(+) ions from the cytoplasm to the periplasm. NqrA to NqrE are probably involved in the second step, the conversion of ubisemiquinone to ubiquinol. This chain is Na(+)-translocating NADH-quinone reductase subunit D, found in Chlamydia abortus (strain DSM 27085 / S26/3) (Chlamydophila abortus).